The sequence spans 705 residues: Lethal(3)malignant brain tumor-like protein 2 (705 aa).

A disordered region spans residues 1-84 (MEKPPSIEET…GTPRSLDGSG (84 aa)). S13 is modified (phosphoserine). A compositionally biased stretch (acidic residues) spans 15–25 (PMEEEEDDDLE). Residues 38 to 49 (SSVGSESSSYLE) show a composition bias toward low complexity. Acidic residues predominate over residues 50–60 (ESSEAENEDRE). S67 carries the phosphoserine modification. T76 is subject to Phosphothreonine. The FCS-type zinc finger occupies 81-116 (DGSGSEPAVCEMCGIVGTREAFFSKTKRFCSVSCSR). Zn(2+) is bound by residues C90, C93, C110, and C114. MBT repeat units lie at residues 179–283 (FDWG…LVPP), 291–391 (TDWK…IKMS), 397–500 (MAHH…LTPP), and 508–604 (FNWE…LQPP). Residue S338 is modified to Phosphoserine. A Glycyl lysine isopeptide (Lys-Gly) (interchain with G-Cter in SUMO2) cross-link involves residue K405. Residues 608-705 (EPATPLKAKE…VENIKQETDD (98 aa)) form a disordered region. Basic residues predominate over residues 619–634 (TKKKKKQFGKKRKRIP). Glycyl lysine isopeptide (Lys-Gly) (interchain with G-Cter in SUMO2) cross-links involve residues K647, K659, and K675. Phosphoserine occurs at positions 683, 688, and 689. Residue K700 forms a Glycyl lysine isopeptide (Lys-Gly) (interchain with G-Cter in SUMO1); alternate linkage. A Glycyl lysine isopeptide (Lys-Gly) (interchain with G-Cter in SUMO2); alternate cross-link involves residue K700.

As to quaternary structure, part of the E2F6.com-1 complex in G0 phase composed of E2F6, MGA, MAX, TFDP1, CBX3, BAT8, EUHMTASE1, RING1, RNF2, MBLR, BAT8 and YAF2.

The protein resides in the nucleus. Functionally, putative Polycomb group (PcG) protein. PcG proteins maintain the transcriptionally repressive state of genes, probably via a modification of chromatin, rendering it heritably changed in its expressibility. Its association with a chromatin-remodeling complex suggests that it may contribute to prevent expression of genes that trigger the cell into mitosis. Binds to monomethylated and dimethylated 'Lys-20' on histone H4. Binds histone H3 peptides that are monomethylated or dimethylated on 'Lys-4', 'Lys-9' or 'Lys-27'. This chain is Lethal(3)malignant brain tumor-like protein 2 (L3MBTL2), found in Pongo abelii (Sumatran orangutan).